A 404-amino-acid polypeptide reads, in one-letter code: Cytochrome P450 monooxygenase avaI (404 aa).

Position 382 (cysteine 382) interacts with heme.

Belongs to the cytochrome P450 family. The cofactor is heme.

It participates in secondary metabolite biosynthesis. Cytochrome P450 monooxygenase; part of the cluster that mediates the biosynthesis of a highly modified cyclo-arginine-tryptophan dipeptide (cRW). The first step of the pathway is perfornmed by the arginine-containing cyclodipeptide synthase (RCPDS) avaA that acts as the scaffold-generating enzyme and is responsible for formation of the cyclo-Arg-Trp (cRW) diketopiperazine. AvaB then acts as a multifunctional flavoenzyme that is responsible for generating the cyclo-Arg-formylkynurenine DKP, which can be deformylated by avaC. AvaB then further catalyzes an additional N-oxidation followed by cyclization and dehydration. The next step is an N-acetylation of the guanidine group catalyzed by the arginine N-acetyltransferase avaD. The roles of the additional enzymes identified within the ava cluster still have to be determined. The protein is Cytochrome P450 monooxygenase avaI of Aspergillus versicolor.